The following is a 167-amino-acid chain: Ribosome maturation factor RimM (167 aa).

The 72-residue stretch at 94-165 folds into the PRC barrel domain; the sequence is ENEYYYSDII…TIRITPMEGL (72 aa).

This sequence belongs to the RimM family. In terms of assembly, binds ribosomal protein uS19.

The protein localises to the cytoplasm. Functionally, an accessory protein needed during the final step in the assembly of 30S ribosomal subunit, possibly for assembly of the head region. Essential for efficient processing of 16S rRNA. May be needed both before and after RbfA during the maturation of 16S rRNA. It has affinity for free ribosomal 30S subunits but not for 70S ribosomes. The chain is Ribosome maturation factor RimM from Staphylococcus haemolyticus (strain JCSC1435).